A 262-amino-acid polypeptide reads, in one-letter code: Nickel import ATP-binding protein NikD (262 aa).

The ABC transporter domain occupies 6 to 249 (LAIEGLTATT…PGHEVTRMLV (244 aa)). An ATP-binding site is contributed by 42 to 49 (GASGSGKS).

The protein belongs to the ABC transporter superfamily. Nickel importer (TC 3.A.1.5.3) family. The complex is composed of two ATP-binding proteins (NikD and NikE), two transmembrane proteins (NikB and NikC) and a solute-binding protein (NikA).

Its subcellular location is the cell inner membrane. It catalyses the reaction Ni(2+)(out) + ATP + H2O = Ni(2+)(in) + ADP + phosphate + H(+). Its function is as follows. Part of the ABC transporter complex NikABCDE involved in nickel import. Responsible for energy coupling to the transport system. This Brucella suis biovar 1 (strain 1330) protein is Nickel import ATP-binding protein NikD.